The sequence spans 120 residues: MAVDTTAEVKAIARYIRMSPHKVRRVLDQIRGRSYREALIILEFMPYRACDPILKVLRSAAANAEHNEGLDRATLVVSQAYADGGPSLRRYRPRAQGRAYQIRKPTCHITVAVAPEITEE.

It belongs to the universal ribosomal protein uL22 family. In terms of assembly, part of the 50S ribosomal subunit.

In terms of biological role, this protein binds specifically to 23S rRNA; its binding is stimulated by other ribosomal proteins, e.g. L4, L17, and L20. It is important during the early stages of 50S assembly. It makes multiple contacts with different domains of the 23S rRNA in the assembled 50S subunit and ribosome. The globular domain of the protein is located near the polypeptide exit tunnel on the outside of the subunit, while an extended beta-hairpin is found that lines the wall of the exit tunnel in the center of the 70S ribosome. The protein is Large ribosomal subunit protein uL22 of Rippkaea orientalis (strain PCC 8801 / RF-1) (Cyanothece sp. (strain PCC 8801)).